The primary structure comprises 185 residues: MSRLLVGLKLAQSHYLSQLHKYPVATKAVTSGFLYLISDSLVQGIELSRDKDKKYDFKRSMRMAVFGFAVTGPLFHYWFKYLDKHFPKKSYRHAFIKLTIDQVVCSPVFNFLFFSGMGILEGKSKDDIVEKLKKDWLTTYVSDCVVWPFINFVNFAYISSIHRVTFMNVCNIGWGAFLAKMNSSH.

3 helical membrane-spanning segments follow: residues 63 to 83 (MAVF…KYLD), 100 to 120 (IDQV…MGIL), and 141 to 161 (VSDC…ISSI).

This sequence belongs to the peroxisomal membrane protein PXMP2/4 family.

The protein localises to the membrane. The chain is PXMP2/4 family protein 4 from Dictyostelium discoideum (Social amoeba).